Consider the following 75-residue polypeptide: MDAEAAKMIGAGLAAIGMIGSGIGVGNIWANLIATVGRNPAAKSTVELYGWIGFAVTEAIALFALVVALILLFAA.

2 helical membrane-spanning segments follow: residues 9–29 (IGAG…GNIW) and 52–72 (IGFA…LILL).

Belongs to the ATPase C chain family. In terms of assembly, F-type ATPases have 2 components, F(1) - the catalytic core - and F(0) - the membrane proton channel. F(1) has five subunits: alpha(3), beta(3), gamma(1), delta(1), epsilon(1). F(0) has four main subunits: a(1), b(1), b'(1) and c(10-14). The alpha and beta chains form an alternating ring which encloses part of the gamma chain. F(1) is attached to F(0) by a central stalk formed by the gamma and epsilon chains, while a peripheral stalk is formed by the delta, b and b' chains.

The protein localises to the cell inner membrane. Its function is as follows. F(1)F(0) ATP synthase produces ATP from ADP in the presence of a proton or sodium gradient. F-type ATPases consist of two structural domains, F(1) containing the extramembraneous catalytic core and F(0) containing the membrane proton channel, linked together by a central stalk and a peripheral stalk. During catalysis, ATP synthesis in the catalytic domain of F(1) is coupled via a rotary mechanism of the central stalk subunits to proton translocation. Key component of the F(0) channel; it plays a direct role in translocation across the membrane. A homomeric c-ring of between 10-14 subunits forms the central stalk rotor element with the F(1) delta and epsilon subunits. This Rhodospirillum rubrum (strain ATCC 11170 / ATH 1.1.1 / DSM 467 / LMG 4362 / NCIMB 8255 / S1) protein is ATP synthase subunit c.